The chain runs to 343 residues: Protein RecA (343 aa).

66-73 lines the ATP pocket; the sequence is GPESSGKT.

This sequence belongs to the RecA family.

It localises to the cytoplasm. Can catalyze the hydrolysis of ATP in the presence of single-stranded DNA, the ATP-dependent uptake of single-stranded DNA by duplex DNA, and the ATP-dependent hybridization of homologous single-stranded DNAs. It interacts with LexA causing its activation and leading to its autocatalytic cleavage. This is Protein RecA from Rickettsia massiliae (strain Mtu5).